A 153-amino-acid polypeptide reads, in one-letter code: 17.3 kDa class I heat shock protein (153 aa).

Positions 39–153 constitute a sHSP domain; the sequence is ENSAFVSTRV…PDVKAIDISG (115 aa).

It belongs to the small heat shock protein (HSP20) family. As to quaternary structure, forms oligomeric structures.

It localises to the cytoplasm. The polypeptide is 17.3 kDa class I heat shock protein (HSP17.3-B) (Glycine max (Soybean)).